Consider the following 119-residue polypeptide: UPF0212 protein Mlab_0931 (119 aa).

It belongs to the UPF0212 family.

In Methanocorpusculum labreanum (strain ATCC 43576 / DSM 4855 / Z), this protein is UPF0212 protein Mlab_0931.